We begin with the raw amino-acid sequence, 444 residues long: N-succinylarginine dihydrolase (444 aa).

Substrate is bound by residues 19 to 28 (SGLSFGNVAS), asparagine 110, and 137 to 138 (HR). The active site involves glutamate 174. Substrate is bound at residue arginine 214. Residue histidine 250 is part of the active site. Residues aspartate 252 and asparagine 362 each contribute to the substrate site. Cysteine 368 serves as the catalytic Nucleophile.

The protein belongs to the succinylarginine dihydrolase family. As to quaternary structure, homodimer.

The enzyme catalyses N(2)-succinyl-L-arginine + 2 H2O + 2 H(+) = N(2)-succinyl-L-ornithine + 2 NH4(+) + CO2. The protein operates within amino-acid degradation; L-arginine degradation via AST pathway; L-glutamate and succinate from L-arginine: step 2/5. Its function is as follows. Catalyzes the hydrolysis of N(2)-succinylarginine into N(2)-succinylornithine, ammonia and CO(2). The protein is N-succinylarginine dihydrolase of Photobacterium profundum (strain SS9).